The following is a 190-amino-acid chain: Potassium-transporting ATPase KdpC subunit (190 aa).

A helical membrane pass occupies residues 10 to 30 (TFIFLLLITGGVYPLLTTVLG).

This sequence belongs to the KdpC family. The system is composed of three essential subunits: KdpA, KdpB and KdpC.

It is found in the cell inner membrane. Its function is as follows. Part of the high-affinity ATP-driven potassium transport (or Kdp) system, which catalyzes the hydrolysis of ATP coupled with the electrogenic transport of potassium into the cytoplasm. This subunit acts as a catalytic chaperone that increases the ATP-binding affinity of the ATP-hydrolyzing subunit KdpB by the formation of a transient KdpB/KdpC/ATP ternary complex. The protein is Potassium-transporting ATPase KdpC subunit of Escherichia coli (strain K12 / MC4100 / BW2952).